The primary structure comprises 382 residues: Opsin-VA (382 aa).

Residues 1 to 35 lie on the Extracellular side of the membrane; that stretch reads MELFPVAVNGVSHAEDPFSGPLTFIAPWNYKVLAT. A helical membrane pass occupies residues 36–56; it reads LMFVVTAASLSENFAVMLVTF. At 57 to 67 the chain is on the cytoplasmic side; it reads RFTQLRKPLNY. A helical transmembrane segment spans residues 68-88; that stretch reads IIVNLSLADFLVSLTGGTISF. The Extracellular portion of the chain corresponds to 89–103; it reads LTNYHGYFFLGKWAC. A disulfide bridge connects residues cysteine 103 and cysteine 180. A helical transmembrane segment spans residues 104 to 124; it reads VLEGFAVTYFGIVALWSLAVL. The Cytoplasmic segment spans residues 125–147; it reads AFERFFVICRPLGNIRLRGKHAA. Residues 148–168 form a helical membrane-spanning segment; the sequence is LGLLFVWTFSFIWTIPPVLGW. Residues 169–193 are Extracellular-facing; it reads SSYTVSKIGTTCEPNWYSGNFHDHT. A helical membrane pass occupies residues 194–214; it reads FIIAFFITCFILPLGVIVVCY. At 215 to 244 the chain is on the cytoplasmic side; that stretch reads CKLIKKLRKVSNTHGRLGNARKPERQVTRM. Residues 245-265 form a helical membrane-spanning segment; sequence VVVMIVAFMVAWTPYAAFSIV. At 266–279 the chain is on the extracellular side; it reads VTAHPSIHLDPRLA. Residues 280-300 form a helical membrane-spanning segment; that stretch reads AAPAFFSKTAAVYNPVIYVFM. At lysine 287 the chain carries N6-(retinylidene)lysine. Over 301–382 the chain is Cytoplasmic; sequence NKQFRKCLVQ…PIPENKVCPM (82 aa). Residues 330-346 are compositionally biased toward polar residues; the sequence is RQGMTNESHTGEMSTIA. The tract at residues 330–371 is disordered; the sequence is RQGMTNESHTGEMSTIASRIPKDGSIPEKTQEHPGERRSLAH. Over residues 349–368 the composition is skewed to basic and acidic residues; it reads IPKDGSIPEKTQEHPGERRS.

Belongs to the G-protein coupled receptor 1 family. Opsin subfamily. In terms of tissue distribution, expressed in a subset of retinal horizontal cells as well as in retinal ganglion cells.

It localises to the membrane. The protein is Opsin-VA of Rutilus rutilus (Roach).